Reading from the N-terminus, the 634-residue chain is Chaperone protein DnaK (634 aa).

Threonine 198 bears the Phosphothreonine; by autocatalysis mark. Positions 599–634 (KQTQEGAEAASEAGEQSAGDEGVVDAEFEEVDEQNK) are disordered. Over residues 602–619 (QEGAEAASEAGEQSAGDE) the composition is skewed to low complexity. Residues 620–634 (GVVDAEFEEVDEQNK) are compositionally biased toward acidic residues.

This sequence belongs to the heat shock protein 70 family.

In terms of biological role, acts as a chaperone. In Syntrophotalea carbinolica (strain DSM 2380 / NBRC 103641 / GraBd1) (Pelobacter carbinolicus), this protein is Chaperone protein DnaK.